A 635-amino-acid polypeptide reads, in one-letter code: Sodium- and chloride-dependent transporter XTRP3B (635 aa).

The segment at 1 to 38 (MESPSAHAVSLPEDEELQPWGGAGGPGQHPGRPRSTEC) is disordered. Topologically, residues 1–56 (MESPSAHAVSLPEDEELQPWGGAGGPGQHPGRPRSTECAHPGVVEKVRPKWDNPLQ) are cytoplasmic. Residues 57 to 77 (FLLVCISYAVGLGNVWRFPYL) traverse the membrane as a helical segment. At 78-85 (CQMYGGGN) the chain is on the extracellular side. A helical transmembrane segment spans residues 86–106 (FLVPYIIMLIVEGMPLLYLEL). Residues 107–127 (AVGQRMRQGSIGAWRTISPYL) lie on the Cytoplasmic side of the membrane. Residues 128-148 (SGVGIASLVVSFLASVYFNVI) form a helical membrane-spanning segment. Topologically, residues 149-208 (NTWALWYLFHSFQDPLPWSVCPLNSNHTGYDEECEKASSTQYFWYRKTLNISPSIQENGG) are extracellular. Asn174 carries an N-linked (GlcNAc...) asparagine glycan. Residues 209–229 (VQWEPALCLTLAWLMVYLCIL) traverse the membrane as a helical segment. The Cytoplasmic segment spans residues 230 to 237 (RGTESTGK). A helical transmembrane segment spans residues 238–258 (VVYFTTSLPYFVLIIYLVRGL). The Extracellular segment spans residues 259–284 (TLHGATNGLAYMFTPKIEQLANPKAW). Residues 285 to 305 (INAATQIFFSLGLGCGGLIAF) traverse the membrane as a helical segment. The Cytoplasmic portion of the chain corresponds to 306-319 (ASYNEPSNDCQKHA). The helical transmembrane segment at 320-340 (LIVSVINSTTAIFSSIVTFSI) threads the bilayer. The Extracellular segment spans residues 341–432 (YGFKATFNYE…EAIKNMEVSQ (92 aa)). Asn400 is a glycosylation site (N-linked (GlcNAc...) asparagine). A helical membrane pass occupies residues 433–453 (LWSVLYFFMLLTLGMGSMVGT). Residues 454-474 (GTAILTPLTDSKIISSYLPKE) are Cytoplasmic-facing. A helical transmembrane segment spans residues 475 to 495 (AISGLVCLLNCAIGMVFTMEA). The Extracellular portion of the chain corresponds to 496–508 (GNYWFDLFNDYTA). Residues 509-529 (TLSLLLIVLVETIAVCYVYGL) traverse the membrane as a helical segment. Residues 530 to 547 (KRFESDLRAMTGRTLSWY) are Cytoplasmic-facing. A helical membrane pass occupies residues 548-568 (WKVMWAFVSPLLIVGLFIFYL). The Extracellular portion of the chain corresponds to 569–597 (SDYILTGTLQYQAWDATQGHVVTKDYPTY). A helical membrane pass occupies residues 598–618 (ALAVIGLLVASSTMCIPLVAL). Residues 619–635 (GTFVTRHFKIREQFSAA) are Cytoplasmic-facing.

Belongs to the sodium:neurotransmitter symporter (SNF) (TC 2.A.22) family. SLC6A20 subfamily. Interacts with CLTRN. As to expression, detected only in kidney and lung.

Its subcellular location is the apical cell membrane. Its function is as follows. Does not show transporter activity with a range of tested amino acids including proline, glutamine, glutamic acid, leucine, alanine, histidine, glycine and arginine. The sequence is that of Sodium- and chloride-dependent transporter XTRP3B (Slc6a20b) from Mus musculus (Mouse).